The sequence spans 477 residues: Myc-associated zinc finger protein (477 aa).

Disordered regions lie at residues Ala-59 to Ala-78 and Thr-121 to Ala-144. Positions Pro-130 to Val-140 are enriched in pro residues. 4 consecutive C2H2-type zinc fingers follow at residues Tyr-190 to His-212, His-279 to His-301, Tyr-307 to His-329, and Tyr-337 to His-360. Ser-361 is modified (phosphoserine). The C2H2-type 5 zinc finger occupies Phe-366–His-388. The C2H2-type 6; atypical zinc finger occupies Val-392–His-413.

Interacts with BPTF. Expressed in Purkinje cells in the brain (at protein level).

The protein localises to the nucleus. Transcriptional regulator. Acts as a transcriptional activator that binds to purine-rich GAGA sites found in the promoter of many genes including insulin I and II and islet amyloid polypeptide. The chain is Myc-associated zinc finger protein (Maz) from Mus musculus (Mouse).